The sequence spans 29 residues: Cytochrome b6-f complex subunit 8 (29 aa).

Residues 3–23 (IISLAWAALMVVFTFSLSLVV) traverse the membrane as a helical segment.

Belongs to the PetN family. In terms of assembly, the 4 large subunits of the cytochrome b6-f complex are cytochrome b6, subunit IV (17 kDa polypeptide, PetD), cytochrome f and the Rieske protein, while the 4 small subunits are PetG, PetL, PetM and PetN. The complex functions as a dimer.

The protein resides in the plastid. Its subcellular location is the chloroplast thylakoid membrane. Its function is as follows. Component of the cytochrome b6-f complex, which mediates electron transfer between photosystem II (PSII) and photosystem I (PSI), cyclic electron flow around PSI, and state transitions. The polypeptide is Cytochrome b6-f complex subunit 8 (Nicotiana tomentosiformis (Tobacco)).